The following is a 1132-amino-acid chain: Mis18-binding protein 1 (1132 aa).

K7 is covalently cross-linked (Glycyl lysine isopeptide (Lys-Gly) (interchain with G-Cter in SUMO2)). A Phosphoserine modification is found at S9. K65 is covalently cross-linked (Glycyl lysine isopeptide (Lys-Gly) (interchain with G-Cter in SUMO2)). A phosphoserine mark is found at S110, S131, S135, S172, and S192. Residues 123–154 are disordered; it reads LRDKQEQPSRNSSLLEPQKSGNNETFTPNRVE. Residues 130 to 150 are compositionally biased toward polar residues; the sequence is PSRNSSLLEPQKSGNNETFTP. Residues K211 and K262 each participate in a glycyl lysine isopeptide (Lys-Gly) (interchain with G-Cter in SUMO2) cross-link. S299 carries the post-translational modification Phosphoserine. A disordered region spans residues 306-332; the sequence is SERTTEGTSQQKVKEGNGKTVPGETGL. S365 is modified (phosphoserine). The SANTA domain occupies 383–469; it reads VQLQEWMIKS…MFGFPENWKE (87 aa). The tract at residues 482-518 is disordered; that stretch reads EKNREKTKQKQKTGRSVRDIRKSMKNDARENQTDTAQ. Residues 497–513 are compositionally biased toward basic and acidic residues; the sequence is SVRDIRKSMKNDARENQ. Residues K534, K612, K639, and K647 each participate in a glycyl lysine isopeptide (Lys-Gly) (interchain with G-Cter in SUMO2) cross-link. The residue at position 653 (T653) is a Phosphothreonine. Glycyl lysine isopeptide (Lys-Gly) (interchain with G-Cter in SUMO2) cross-links involve residues K727 and K742. Residues 765–798 are disordered; the sequence is HQSSPDLSSEESETEKEIKRKAEVKKTKAGNTKE. Phosphoserine is present on residues S772 and S773. Residues 779 to 790 show a composition bias toward basic and acidic residues; that stretch reads EKEIKRKAEVKK. T821 carries the phosphothreonine modification. S824 bears the Phosphoserine mark. Residue K840 forms a Glycyl lysine isopeptide (Lys-Gly) (interchain with G-Cter in SUMO2) linkage. Phosphoserine is present on S860. The region spanning 875-930 is the SANT domain; sequence IQDKEWNEKELQKLHCAFASLPKHKPGFWSEVAAAVGSRSPEECQRKYMENPRGKG. K899 participates in a covalent cross-link: Glycyl lysine isopeptide (Lys-Gly) (interchain with G-Cter in SUMO2). The segment at 923–957 is disordered; that stretch reads MENPRGKGSQKHVTKKKPANSKGQNGKRGDADQKQ. Positions 930-941 are enriched in basic residues; sequence GSQKHVTKKKPA. Residues K956, K964, and K983 each participate in a glycyl lysine isopeptide (Lys-Gly) (interchain with G-Cter in SUMO2) cross-link. S1008 bears the Phosphoserine mark. K1079 is covalently cross-linked (Glycyl lysine isopeptide (Lys-Gly) (interchain with G-Cter in SUMO2)). Phosphoserine is present on S1086. Residues T1087 and T1089 each carry the phosphothreonine modification. S1104 and S1116 each carry phosphoserine.

As to quaternary structure, interacts with SP1. Interacts with MIS18A. Identified in a complex containing MIS18A, OIP5/MIS18B, MIS18BP1, RBBP7 and RBBP4. Interacts with KAT7/HBO1. Interacts (via N-terminus) with FLNA (via N-terminus).

The protein resides in the nucleus. It localises to the chromosome. The protein localises to the centromere. Its function is as follows. Required for recruitment of CENPA to centromeres and normal chromosome segregation during mitosis. The polypeptide is Mis18-binding protein 1 (MIS18BP1) (Homo sapiens (Human)).